The following is a 274-amino-acid chain: Penicillin-insensitive murein endopeptidase (274 aa).

The signal sequence occupies residues 1–19 (MKNTVIALLALLASAGSLA). 3 disulfide bridges follow: cysteine 44–cysteine 265, cysteine 187–cysteine 235, and cysteine 216–cysteine 223. Histidine 110, histidine 113, aspartate 120, aspartate 147, histidine 150, and histidine 211 together coordinate Zn(2+). The disordered stretch occupies residues 224-263 (EDQAPPPPGDGCGAELQSWFEPPKPGSTPPVKKTPPPLPP). The segment covering 245 to 263 (PPKPGSTPPVKKTPPPLPP) has biased composition (pro residues).

The protein belongs to the peptidase M74 family. As to quaternary structure, dimer. It depends on Zn(2+) as a cofactor.

The protein localises to the periplasm. Functionally, murein endopeptidase that cleaves the D-alanyl-meso-2,6-diamino-pimelyl amide bond that connects peptidoglycan strands. Likely plays a role in the removal of murein from the sacculus. The sequence is that of Penicillin-insensitive murein endopeptidase from Klebsiella pneumoniae subsp. pneumoniae (strain ATCC 700721 / MGH 78578).